Reading from the N-terminus, the 212-residue chain is Thiamine-phosphate synthase (212 aa).

Residue Gln-38–Lys-42 participates in 4-amino-2-methyl-5-(diphosphooxymethyl)pyrimidine binding. Residues Asp-71 and Asp-90 each coordinate Mg(2+). Lys-138 serves as a coordination point for 4-amino-2-methyl-5-(diphosphooxymethyl)pyrimidine. 2-[(2R,5Z)-2-carboxy-4-methylthiazol-5(2H)-ylidene]ethyl phosphate is bound at residue Gly-166.

It belongs to the thiamine-phosphate synthase family. The cofactor is Mg(2+).

It carries out the reaction 2-[(2R,5Z)-2-carboxy-4-methylthiazol-5(2H)-ylidene]ethyl phosphate + 4-amino-2-methyl-5-(diphosphooxymethyl)pyrimidine + 2 H(+) = thiamine phosphate + CO2 + diphosphate. The catalysed reaction is 2-(2-carboxy-4-methylthiazol-5-yl)ethyl phosphate + 4-amino-2-methyl-5-(diphosphooxymethyl)pyrimidine + 2 H(+) = thiamine phosphate + CO2 + diphosphate. The enzyme catalyses 4-methyl-5-(2-phosphooxyethyl)-thiazole + 4-amino-2-methyl-5-(diphosphooxymethyl)pyrimidine + H(+) = thiamine phosphate + diphosphate. The protein operates within cofactor biosynthesis; thiamine diphosphate biosynthesis; thiamine phosphate from 4-amino-2-methyl-5-diphosphomethylpyrimidine and 4-methyl-5-(2-phosphoethyl)-thiazole: step 1/1. In terms of biological role, condenses 4-methyl-5-(beta-hydroxyethyl)thiazole monophosphate (THZ-P) and 2-methyl-4-amino-5-hydroxymethyl pyrimidine pyrophosphate (HMP-PP) to form thiamine monophosphate (TMP). The polypeptide is Thiamine-phosphate synthase (Chlamydia caviae (strain ATCC VR-813 / DSM 19441 / 03DC25 / GPIC) (Chlamydophila caviae)).